The primary structure comprises 428 residues: Light-independent protochlorophyllide reductase subunit N (428 aa).

Residues C31, C56, and C117 each coordinate [4Fe-4S] cluster.

It belongs to the BchN/ChlN family. As to quaternary structure, protochlorophyllide reductase is composed of three subunits; BchL, BchN and BchB. Forms a heterotetramer of two BchB and two BchN subunits. [4Fe-4S] cluster is required as a cofactor.

The enzyme catalyses chlorophyllide a + oxidized 2[4Fe-4S]-[ferredoxin] + 2 ADP + 2 phosphate = protochlorophyllide a + reduced 2[4Fe-4S]-[ferredoxin] + 2 ATP + 2 H2O. Its pathway is porphyrin-containing compound metabolism; bacteriochlorophyll biosynthesis (light-independent). Component of the dark-operative protochlorophyllide reductase (DPOR) that uses Mg-ATP and reduced ferredoxin to reduce ring D of protochlorophyllide (Pchlide) to form chlorophyllide a (Chlide). This reaction is light-independent. The NB-protein (BchN-BchB) is the catalytic component of the complex. The chain is Light-independent protochlorophyllide reductase subunit N from Rhodopseudomonas palustris (strain BisB5).